Consider the following 135-residue polypeptide: Agouti-signaling protein (135 aa).

A signal peptide spans 1–22 (MNILRLLLATLLVCLCLLTAYS). N-linked (GlcNAc...) asparagine glycosylation occurs at Asn39. A disordered region spans residues 56–101 (NKKSKKISRKEAEKKRSSKKKASMKNVAQPRRPRPPPPAPCVATRD). Cystine bridges form between Cys96–Cys111, Cys103–Cys117, Cys110–Cys128, Cys114–Cys135, and Cys119–Cys126. The Agouti domain maps to 96–135 (CVATRDSCKPPAPACCDPCASCQCRFFRSSCSCRVLNPTC).

Its subcellular location is the secreted. In terms of biological role, involved in the regulation of melanogenesis. The binding of ASP to MC1R precludes alpha-MSH initiated signaling and thus blocks production of cAMP, leading to a down-regulation of eumelanogenesis (brown/black pigment) and thus increasing synthesis of pheomelanin (yellow/red pigment). This chain is Agouti-signaling protein (ASIP), found in Felis catus (Cat).